We begin with the raw amino-acid sequence, 97 residues long: Co-chaperonin GroES (97 aa).

This sequence belongs to the GroES chaperonin family. Heptamer of 7 subunits arranged in a ring. Interacts with the chaperonin GroEL.

The protein resides in the cytoplasm. In terms of biological role, together with the chaperonin GroEL, plays an essential role in assisting protein folding. The GroEL-GroES system forms a nano-cage that allows encapsulation of the non-native substrate proteins and provides a physical environment optimized to promote and accelerate protein folding. GroES binds to the apical surface of the GroEL ring, thereby capping the opening of the GroEL channel. The chain is Co-chaperonin GroES from Erwinia tasmaniensis (strain DSM 17950 / CFBP 7177 / CIP 109463 / NCPPB 4357 / Et1/99).